A 310-amino-acid chain; its full sequence is Ornithine carbamoyltransferase (310 aa).

Carbamoyl phosphate contacts are provided by residues 57–60, Gln84, Arg108, and 135–138; these read STRT and HPCQ. Residues Asn166, Asp229, and 233–234 contribute to the L-ornithine site; that span reads SM. Residues 269–270 and Arg297 each bind carbamoyl phosphate; that span reads CL.

It belongs to the aspartate/ornithine carbamoyltransferase superfamily. OTCase family.

Its subcellular location is the cytoplasm. The enzyme catalyses carbamoyl phosphate + L-ornithine = L-citrulline + phosphate + H(+). Its pathway is amino-acid biosynthesis; L-arginine biosynthesis; L-arginine from L-ornithine and carbamoyl phosphate: step 1/3. Functionally, reversibly catalyzes the transfer of the carbamoyl group from carbamoyl phosphate (CP) to the N(epsilon) atom of ornithine (ORN) to produce L-citrulline. This chain is Ornithine carbamoyltransferase, found in Thermosynechococcus vestitus (strain NIES-2133 / IAM M-273 / BP-1).